Reading from the N-terminus, the 584-residue chain is Phosphoinositide phospholipase C 7 (584 aa).

Positions 26 to 102 constitute an EF-hand-like domain; the sequence is EIKTLFDNYS…NSPLSSLEVH (77 aa). The PI-PLC X-box domain maps to 103–248; it reads QDMDAPLSHY…LKKRIMISTK (146 aa). Catalysis depends on residues H118 and H164. Positions 285–318 are disordered; sequence DRSVDKNDSNGDDDDDDDDDDDDDDGDDKIKKNA. A Phosphoserine modification is found at S287. Over residues 294 to 311 the composition is skewed to acidic residues; sequence NGDDDDDDDDDDDDDDGD. The PI-PLC Y-box domain occupies 323 to 439; the sequence is KHLIAIEAGK…GYIKKPDLLL (117 aa). A C2 domain is found at 433 to 566; the sequence is KKPDLLLKSN…QGIRAVPLRN (134 aa).

It depends on Ca(2+) as a cofactor. As to expression, expressed in leaves, roots, flowers and siliques.

The protein localises to the cell membrane. It carries out the reaction a 1,2-diacyl-sn-glycero-3-phospho-(1D-myo-inositol-4,5-bisphosphate) + H2O = 1D-myo-inositol 1,4,5-trisphosphate + a 1,2-diacyl-sn-glycerol + H(+). In terms of biological role, the production of the second messenger molecules diacylglycerol (DAG) and inositol 1,4,5-trisphosphate (IP3) is mediated by activated phosphatidylinositol-specific phospholipase C enzymes. This is Phosphoinositide phospholipase C 7 (PLC7) from Arabidopsis thaliana (Mouse-ear cress).